Consider the following 179-residue polypeptide: Centromere protein R (179 aa).

Residues 1–79 (MSAKRSLKLD…RLSRRGQPQT (79 aa)) form a disordered region. Positions 30–50 (NSYSPTTGTCQISPFSSPTSH) are enriched in polar residues. Residues 51–64 (NAEDLRNGLSHGDE) are compositionally biased toward basic and acidic residues. Positions 172–176 (LQLLL) match the LXXLL motif motif.

Its subcellular location is the nucleus. It localises to the chromosome. The protein resides in the centromere. The protein localises to the kinetochore. In terms of biological role, transcription coregulator that can have both coactivator and corepressor functions. Involved in the coactivation of nuclear receptors for retinoid X (RXRs) and thyroid hormone (TRs) in a ligand-dependent fashion. Probable component of a centromeric complex involved in assembly of kinetochore proteins, mitotic progression and chromosome segregation. The protein is Centromere protein R (CENPR) of Gallus gallus (Chicken).